Reading from the N-terminus, the 296-residue chain is Formamidopyrimidine-DNA glycosylase (296 aa).

The active-site Schiff-base intermediate with DNA is Pro2. Glu3 functions as the Proton donor in the catalytic mechanism. Catalysis depends on Lys58, which acts as the Proton donor; for beta-elimination activity. Residues His104, Arg126, and Lys169 each contribute to the DNA site. Residues 260–296 (SVYDREGQACGTPGCGGTVARIVQAGRSTFYCAACQK) form an FPG-type zinc finger. Arg286 (proton donor; for delta-elimination activity) is an active-site residue.

It belongs to the FPG family. As to quaternary structure, monomer. The cofactor is Zn(2+).

The catalysed reaction is Hydrolysis of DNA containing ring-opened 7-methylguanine residues, releasing 2,6-diamino-4-hydroxy-5-(N-methyl)formamidopyrimidine.. The enzyme catalyses 2'-deoxyribonucleotide-(2'-deoxyribose 5'-phosphate)-2'-deoxyribonucleotide-DNA = a 3'-end 2'-deoxyribonucleotide-(2,3-dehydro-2,3-deoxyribose 5'-phosphate)-DNA + a 5'-end 5'-phospho-2'-deoxyribonucleoside-DNA + H(+). Involved in base excision repair of DNA damaged by oxidation or by mutagenic agents. Acts as a DNA glycosylase that recognizes and removes damaged bases. Has a preference for oxidized purines, such as 7,8-dihydro-8-oxoguanine (8-oxoG). Has AP (apurinic/apyrimidinic) lyase activity and introduces nicks in the DNA strand. Cleaves the DNA backbone by beta-delta elimination to generate a single-strand break at the site of the removed base with both 3'- and 5'-phosphates. This is Formamidopyrimidine-DNA glycosylase from Rhizobium etli (strain CIAT 652).